A 345-amino-acid polypeptide reads, in one-letter code: Flap endonuclease 1 (345 aa).

The tract at residues 1–103 is N-domain; that stretch reads MGIKQLSKLL…KELEKRKERR (103 aa). Asp34 contributes to the Mg(2+) binding site. DNA is bound by residues Arg47 and Arg69. Mg(2+)-binding residues include Asp85, Glu157, Glu159, Asp178, and Asp180. The I-domain stretch occupies residues 121 to 252; the sequence is LMEMYDKRKT…KKALGLIKKH (132 aa). A DNA-binding site is contributed by Glu157. DNA is bound by residues Gly230 and Asp232. A Mg(2+)-binding site is contributed by Asp232. Residues 333 to 341 are interaction with PCNA; that stretch reads TQGRLDCFI.

Belongs to the XPG/RAD2 endonuclease family. FEN1 subfamily. In terms of assembly, interacts with PCNA. Three molecules of FEN1 bind to one PCNA trimer with each molecule binding to one PCNA monomer. PCNA stimulates the nuclease activity without altering cleavage specificity. Mg(2+) serves as cofactor. Post-translationally, phosphorylated. Phosphorylation upon DNA damage induces relocalization to the nuclear plasma.

The protein localises to the nucleus. It is found in the nucleolus. The protein resides in the nucleoplasm. It localises to the mitochondrion. Structure-specific nuclease with 5'-flap endonuclease and 5'-3' exonuclease activities involved in DNA replication and repair. During DNA replication, cleaves the 5'-overhanging flap structure that is generated by displacement synthesis when DNA polymerase encounters the 5'-end of a downstream Okazaki fragment. It enters the flap from the 5'-end and then tracks to cleave the flap base, leaving a nick for ligation. Also involved in the long patch base excision repair (LP-BER) pathway, by cleaving within the apurinic/apyrimidinic (AP) site-terminated flap. Acts as a genome stabilization factor that prevents flaps from equilibrating into structures that lead to duplications and deletions. Also possesses 5'-3' exonuclease activity on nicked or gapped double-stranded DNA, and exhibits RNase H activity. Also involved in replication and repair of rDNA and in repairing mitochondrial DNA. This chain is Flap endonuclease 1, found in Encephalitozoon cuniculi (strain GB-M1) (Microsporidian parasite).